The sequence spans 153 residues: Histone H2A (153 aa).

Disordered regions lie at residues Met-1–Ser-27 and Lys-131–Ala-153. Over residues Ala-132 to Thr-147 the composition is skewed to low complexity. An SPKK motif motif is present at residues Ser-149–Lys-152.

The protein belongs to the histone H2A family. The nucleosome is a histone octamer containing two molecules each of H2A, H2B, H3 and H4 assembled in one H3-H4 heterotetramer and two H2A-H2B heterodimers. The octamer wraps approximately 147 bp of DNA.

The protein resides in the nucleus. It is found in the chromosome. In terms of biological role, core component of nucleosome. Nucleosomes wrap and compact DNA into chromatin, limiting DNA accessibility to the cellular machineries which require DNA as a template. Histones thereby play a central role in transcription regulation, DNA repair, DNA replication and chromosomal stability. DNA accessibility is regulated via a complex set of post-translational modifications of histones, also called histone code, and nucleosome remodeling. This chain is Histone H2A, found in Euphorbia esula (Leafy spurge).